We begin with the raw amino-acid sequence, 419 residues long: E3 ubiquitin-protein ligase RNF130 (419 aa).

Positions 1-27 (MSGAARAGPARLAALALLTCSLWPTRA) are cleaved as a signal peptide. Residues 28–194 (DNASQEYYTA…MPPKNFSRGS (167 aa)) lie on the Extracellular side of the membrane. N-linked (GlcNAc...) asparagine glycans are attached at residues N29, N40, N112, N135, N172, and N189. The 72-residue stretch at 105 to 176 (IALLQRGNCT…SYLEKNISVQ (72 aa)) folds into the PA domain. Residues 195 to 217 (LVFVSISFIVLMIISSAWLIFYF) traverse the membrane as a helical segment. At 218-419 (IQKIRYTNAR…SLNANEVEWF (202 aa)) the chain is on the cytoplasmic side. The segment at 264–305 (CAVCIESYKQNDVVRVLPCKHVFHKSCVDPWLSEHCTCPMCK) adopts an RING-type zinc-finger fold.

As to expression, expression is highest in liver, with lesser amounts in the lung, spleen, brain, heart, kidney and testis.

The protein localises to the membrane. Its subcellular location is the cytoplasm. It catalyses the reaction S-ubiquitinyl-[E2 ubiquitin-conjugating enzyme]-L-cysteine + [acceptor protein]-L-lysine = [E2 ubiquitin-conjugating enzyme]-L-cysteine + N(6)-ubiquitinyl-[acceptor protein]-L-lysine.. It functions in the pathway protein modification; protein ubiquitination. Its function is as follows. Acts as an E3 ubiquitin-protein ligase. May have a role during the programmed cell death of hematopoietic cells. The protein is E3 ubiquitin-protein ligase RNF130 of Mus musculus (Mouse).